Here is a 31-residue protein sequence, read N- to C-terminus: Chassatide C5 (31 aa).

Residues 1-31 (GVIPCGESCVFIPCISSVVGCSCKNKVCYRN) constitute a cross-link (cyclopeptide (Gly-Asn)). 3 cysteine pairs are disulfide-bonded: Cys-5–Cys-21, Cys-9–Cys-23, and Cys-14–Cys-28.

Post-translationally, this is a cyclic peptide. As to expression, expressed in pedicel, root and stem but not in leaf and fruit (at protein level).

Probably participates in a plant defense mechanism. This is Chassatide C5 from Chassalia chartacea (Chassalia curviflora).